The sequence spans 447 residues: MLTVAILAAGKGTRMASSLPKVLHKLSGKTLLQRVIDSCNELKPDKIFIIVGHKSKEVKDSVFKNNNIHFIVQKPQKGTGHAVQVLSQKVKKHDGKLIVLNGDVPLIKGETLKKLIHYHDSQKADVSLITTKKKNPHGYGRVFAKDNLIEMIIEEKDCNNVQKSNLLINAGIYCFNWKSLSKIINTIKSNNKQNEIYLTDAIYLLKKSYSFEILDNGELQGINNRVQLSKCEETIQNLIKEKHMLGGVTFINPASCTVSEESIIGKDVIIDANTHIRGNSKISNNCKIGPNTFIKDTIINENCEIINSTIFNSVLMDFVNIGPYSHIRPNCEISSYSRIGNFVEIKNSQLDKEVKVNHLSYIGDSTVGKHTNIGAGTITANFDGKKKHPTFIGENSSIGANTVLIAPINLGDSVTTGAGSVITKDSQNNSLAIARTKQVNIENWKKN.

Positions 1 to 225 (MLTVAILAAG…NGELQGINNR (225 aa)) are pyrophosphorylase. UDP-N-acetyl-alpha-D-glucosamine contacts are provided by residues 7–10 (LAAG), Lys21, Gln73, and 78–79 (GT). Asp103 is a Mg(2+) binding site. UDP-N-acetyl-alpha-D-glucosamine-binding residues include Gly140, Glu154, Asn169, and Asn223. Asn223 provides a ligand contact to Mg(2+). The tract at residues 226–246 (VQLSKCEETIQNLIKEKHMLG) is linker. The interval 247-447 (GVTFINPASC…QVNIENWKKN (201 aa)) is N-acetyltransferase. UDP-N-acetyl-alpha-D-glucosamine-binding residues include Arg328 and Lys346. His358 functions as the Proton acceptor in the catalytic mechanism. Residues Tyr361 and Asn372 each coordinate UDP-N-acetyl-alpha-D-glucosamine. Acetyl-CoA is bound by residues Ala375, Ala418, and Arg435.

In the N-terminal section; belongs to the N-acetylglucosamine-1-phosphate uridyltransferase family. It in the C-terminal section; belongs to the transferase hexapeptide repeat family. In terms of assembly, homotrimer. Mg(2+) serves as cofactor.

It is found in the cytoplasm. It carries out the reaction alpha-D-glucosamine 1-phosphate + acetyl-CoA = N-acetyl-alpha-D-glucosamine 1-phosphate + CoA + H(+). It catalyses the reaction N-acetyl-alpha-D-glucosamine 1-phosphate + UTP + H(+) = UDP-N-acetyl-alpha-D-glucosamine + diphosphate. It functions in the pathway nucleotide-sugar biosynthesis; UDP-N-acetyl-alpha-D-glucosamine biosynthesis; N-acetyl-alpha-D-glucosamine 1-phosphate from alpha-D-glucosamine 6-phosphate (route II): step 2/2. The protein operates within nucleotide-sugar biosynthesis; UDP-N-acetyl-alpha-D-glucosamine biosynthesis; UDP-N-acetyl-alpha-D-glucosamine from N-acetyl-alpha-D-glucosamine 1-phosphate: step 1/1. It participates in bacterial outer membrane biogenesis; LPS lipid A biosynthesis. Catalyzes the last two sequential reactions in the de novo biosynthetic pathway for UDP-N-acetylglucosamine (UDP-GlcNAc). The C-terminal domain catalyzes the transfer of acetyl group from acetyl coenzyme A to glucosamine-1-phosphate (GlcN-1-P) to produce N-acetylglucosamine-1-phosphate (GlcNAc-1-P), which is converted into UDP-GlcNAc by the transfer of uridine 5-monophosphate (from uridine 5-triphosphate), a reaction catalyzed by the N-terminal domain. The protein is Bifunctional protein GlmU of Prochlorococcus marinus (strain MIT 9515).